Consider the following 125-residue polypeptide: Large ribosomal subunit protein eL31 (125 aa).

Position 1 is an N-acetylmethionine (methionine 1). Serine 15 carries the post-translational modification Phosphoserine. 2 positions are modified to N6-succinyllysine: lysine 55 and lysine 70. An N6-acetyllysine; alternate modification is found at lysine 75. Lysine 75 bears the N6-succinyllysine; alternate mark. Phosphoserine is present on serine 98.

The protein belongs to the eukaryotic ribosomal protein eL31 family. In terms of assembly, component of the large ribosomal subunit.

The protein localises to the cytoplasm. Component of the large ribosomal subunit. The ribosome is a large ribonucleoprotein complex responsible for the synthesis of proteins in the cell. The protein is Large ribosomal subunit protein eL31 (RPL31) of Pongo abelii (Sumatran orangutan).